The chain runs to 383 residues: Lipid-A-disaccharide synthase (383 aa).

It belongs to the LpxB family.

It catalyses the reaction a lipid X + a UDP-2-N,3-O-bis[(3R)-3-hydroxyacyl]-alpha-D-glucosamine = a lipid A disaccharide + UDP + H(+). The protein operates within bacterial outer membrane biogenesis; LPS lipid A biosynthesis. Condensation of UDP-2,3-diacylglucosamine and 2,3-diacylglucosamine-1-phosphate to form lipid A disaccharide, a precursor of lipid A, a phosphorylated glycolipid that anchors the lipopolysaccharide to the outer membrane of the cell. In Anaeromyxobacter sp. (strain K), this protein is Lipid-A-disaccharide synthase.